Reading from the N-terminus, the 442-residue chain is Histidine--tRNA ligase (442 aa).

The protein belongs to the class-II aminoacyl-tRNA synthetase family. As to quaternary structure, homodimer.

The protein resides in the cytoplasm. It catalyses the reaction tRNA(His) + L-histidine + ATP = L-histidyl-tRNA(His) + AMP + diphosphate + H(+). In Rhodopirellula baltica (strain DSM 10527 / NCIMB 13988 / SH1), this protein is Histidine--tRNA ligase.